Here is a 394-residue protein sequence, read N- to C-terminus: Mannosyl-3-phosphoglycerate synthase (394 aa).

This sequence belongs to the glycosyltransferase 2 family.

It is found in the cytoplasm. The enzyme catalyses (2R)-3-phosphoglycerate + GDP-alpha-D-mannose = 2-O-(alpha-D-mannosyl)-3-phosphoglycerate + GDP + H(+). The protein operates within carbohydrate biosynthesis; 2-(alpha-D-mannosyl)-D-glycerate biosynthesis; 2-(alpha-D-mannosyl)-D-glycerate from GDP-alpha-D-mannose (MPG route): step 1/2. Transfers a mannosyl group from GDP-mannose to phosphoglycerate to form mannosyl-3-phosphoglycerate (MPG). This Pyrococcus abyssi (strain GE5 / Orsay) protein is Mannosyl-3-phosphoglycerate synthase (mngA).